We begin with the raw amino-acid sequence, 506 residues long: MWRLPPKSNANAKVLSRWLLFVGLGIAGWGTQLALPPVSGWFLAFVGIVPLWWQCQVLAPLWAAIAGLCWGWGFYGSSLVWVWDLHPLTWIGIDPVPSWLISRGIWLCLSSWGAVLSGSWALLMARYGVRRSAPWQLLWGVTLWCALEALWSHSPLWWISLSLTQSPGGLVQLGRLAGPTTITAVVMTVNGLVTLSLRQQKWARVGLAMTLVAAIALNGVLSVRVMADRGEPLRVGLIQGNIPTREKLTPEGIRRAWQVYLQGYHQLVSWGVDAVLTPEGALPILWQPQQMNPITEAVREAGVPLWLGTFMETAGGSHQVLLSLDGNGEIDSHYGKVNLVPLGEYIPPWLGGVVQRLSTLRSPLIPGDPEQVFTTPWGNAVVLICFESAFSHRSRWQLVHGGQFILSVANDDPYHRQLMTQHHGHDVLRAVEGDRWLVRCTNTGLSAVIAPTGETLWLSKADEFVIYAATIFRRQTETLYTRYGDWLLPLLLGMLSLSVLRQRGWH.

7 helical membrane-spanning segments follow: residues 10–30 (ANAKVLSRWLLFVGLGIAGWG), 33–53 (LALPPVSGWFLAFVGIVPLWW), 57–77 (VLAPLWAAIAGLCWGWGFYGS), 105–125 (IWLCLSSWGAVLSGSWALLMA), 139–159 (WGVTLWCALEALWSHSPLWWI), 176–196 (LAGPTTITAVVMTVNGLVTLS), and 205–225 (VGLAMTLVAAIALNGVLSVRV). One can recognise a CN hydrolase domain in the interval 238–473 (IQGNIPTREK…FVIYAATIFR (236 aa)). The active-site Proton acceptor is E279. Residue K336 is part of the active site. The active-site Nucleophile is C385. Residues 483–500 (YGDWLLPLLLGMLSLSVL) form a helical membrane-spanning segment.

It belongs to the CN hydrolase family. Apolipoprotein N-acyltransferase subfamily.

The protein localises to the cell inner membrane. The catalysed reaction is N-terminal S-1,2-diacyl-sn-glyceryl-L-cysteinyl-[lipoprotein] + a glycerophospholipid = N-acyl-S-1,2-diacyl-sn-glyceryl-L-cysteinyl-[lipoprotein] + a 2-acyl-sn-glycero-3-phospholipid + H(+). The protein operates within protein modification; lipoprotein biosynthesis (N-acyl transfer). Catalyzes the phospholipid dependent N-acylation of the N-terminal cysteine of apolipoprotein, the last step in lipoprotein maturation. This Thermosynechococcus vestitus (strain NIES-2133 / IAM M-273 / BP-1) protein is Apolipoprotein N-acyltransferase.